A 100-amino-acid polypeptide reads, in one-letter code: NADH-quinone oxidoreductase subunit K (100 aa).

A run of 3 helical transmembrane segments spans residues 4–24 (ITYY…GVLV), 29–49 (LVVF…FVAF), and 63–83 (FFVI…VIAV).

Belongs to the complex I subunit 4L family. As to quaternary structure, NDH-1 is composed of 14 different subunits. Subunits NuoA, H, J, K, L, M, N constitute the membrane sector of the complex.

It is found in the cell inner membrane. The enzyme catalyses a quinone + NADH + 5 H(+)(in) = a quinol + NAD(+) + 4 H(+)(out). Functionally, NDH-1 shuttles electrons from NADH, via FMN and iron-sulfur (Fe-S) centers, to quinones in the respiratory chain. The immediate electron acceptor for the enzyme in this species is believed to be ubiquinone. Couples the redox reaction to proton translocation (for every two electrons transferred, four hydrogen ions are translocated across the cytoplasmic membrane), and thus conserves the redox energy in a proton gradient. The chain is NADH-quinone oxidoreductase subunit K from Myxococcus xanthus (strain DK1622).